The sequence spans 596 residues: Probable lysosomal cobalamin transporter (596 aa).

The next 10 membrane-spanning stretches (helical) occupy residues 7 to 27, 46 to 66, 95 to 115, 145 to 165, 196 to 216, 313 to 333, 350 to 370, 376 to 396, 420 to 440, and 507 to 527; these read AFIWVAYAVAVGIVALIAAIF, IITLTSLLATVLLLPVDIALV, IVYYALYSLDAVLCLLVIPFT, TLFFVVLVVILFLVGFFAPVA, LLISLGTLLYILYTSVGLALL, LVGGILLLLLSVIIWASMLIT, ILGSINIFQPLNWVFVKSSIV, VLMALLVLFLFSSSVTGIAVI, MATVMLTLIILAINYSIAMII, and FFGALAFWAQFVFLAIFLIVF. Residues 566–596 are disordered; it reads WQDIRGKAKNQTPSRGAAGRGIRGDDDHDDD. Residues 587–596 are compositionally biased toward basic and acidic residues; sequence IRGDDDHDDD.

This sequence belongs to the LIMR family. LMBRD1 subfamily.

The protein localises to the lysosome membrane. Probable lysosomal cobalamin transporter. Required to export cobalamin from lysosomes allowing its conversion to cofactors. The protein is Probable lysosomal cobalamin transporter of Sclerotinia sclerotiorum (strain ATCC 18683 / 1980 / Ss-1) (White mold).